Reading from the N-terminus, the 368-residue chain is tRNA-specific 2-thiouridylase MnmA (368 aa).

Residues Ala-24–Ser-31 and Leu-50 contribute to the ATP site. Catalysis depends on Cys-117, which acts as the Nucleophile. A disulfide bridge links Cys-117 with Cys-213. Position 141 (Gly-141) interacts with ATP. Positions Lys-163 to Gln-165 are interaction with tRNA. The active-site Cysteine persulfide intermediate is the Cys-213.

It belongs to the MnmA/TRMU family.

The protein resides in the cytoplasm. It catalyses the reaction S-sulfanyl-L-cysteinyl-[protein] + uridine(34) in tRNA + AH2 + ATP = 2-thiouridine(34) in tRNA + L-cysteinyl-[protein] + A + AMP + diphosphate + H(+). Its function is as follows. Catalyzes the 2-thiolation of uridine at the wobble position (U34) of tRNA, leading to the formation of s(2)U34. The chain is tRNA-specific 2-thiouridylase MnmA from Wolbachia pipientis subsp. Culex pipiens (strain wPip).